The chain runs to 1765 residues: MRRSKADVERYVASVLGLTPSPRQKSMKGFYFAKLYYEAKEYDLAKKYICTYINVQERDPKAHRFLGLLYELEENTEKAVECYRRSVELNPTQKDLVLKIAELLCKNDVTDGRAKYWVERAAKLFPGSPAIYKLKEQLLDCEGEDGWNKLFDLIQSELYVRPDDVHVNIRLVELYRSTKRLKDAVAHCHEAERNIALRSSLEWNSCVVQTLKEYLESLQCLESDKSDWQATNTDLLLAYANLMLLTLSTRDVQENRELLESFDSALQSAKSSLGGNDELSATFLEMKGHFYMYAGSLLLKMGQHGNNVQWRALSELAALCYLIAFQVPRPKIKLREGKAGQNLLEMMACDRLSQSGHMLLSLSRGKQDFLKEVVETFANKIGQSALYDALFSSQSPKDTSFLGSDDIGKIDVQEPELEDLARYDVGAIRAHNGSLQHLTWLGLQWNSLPALPGIRKWLKQLFHRLPHETSRLETNAPESICILDLEVFLLGVVYTSHLQLKEKCNSHHSSYQPLCLPFPVCKQLCTERQKSWWDAVCTLIHRKAVPGNLAKLRLLVQHEINTLRAQEKHGLQPALLVHWAKYLQKTGSGLNSFYGQLEYIGRSVHYWKKVLPLLKIIKKNSIPEPIDPLFKHFHSVDIQASEIVEYEEDAHITFAMLDAVNGNIEDAVTAFESIKSVVSYWNLALIFHRKAEDIENDALSPEEQEECRNYLTKTRDYLIKIIDDGDSNLSVVKKLPVPLESVKQMLNSVMQELEDYSEGGPLYKNGSLRNADSEIKHSTPSPTKYSLSPSKSYKYSPETPPRWTEDRNSLLNMICQQVEAIKKEMQELKLNSSKSASRHRWPTENYGPDSVPDGYQGSQTFHGAPLTVATTGPSVYYSQSPAYNSQYLLRPAANVTPTKGSSNTEFKSTKEGFSIPVSADGFKFGISEPGNQEKKREKPLENDTGFQAQDISGRKKGRGVIFGQTSSTFTFADVAKSTSGEGFQFGKKDLNFKGFSGAGEKLFSSRYGKMANKANTSGDFEKDDDAYKTEDSDDIHFEPVVQMPEKVELVTGEEGEKVLYSQGVKLFRFDAEVRQWKERGLGNLKILKNEVNGKLRMLMRREQVLKVCANHWITTTMNLKPLSGSDRAWMWSASDFSDGDAKLERLAAKFKTPELAEEFKQKFEECQRLLLDIPLQTPHKLVDTGRAAKLIQRAEEMKSGLKDFKTFLTNDQTKVTEEENKGSGTGAAGASDTTIKPNAENTGPTLEWDNYDLREDALDDSVSSSSVHASPLASSPVRKNLFRFDESTTGSNFSFKSALSLSKSPAKLNQSGTSVGTDEESVVTQEEERDGQYFEPVVPLPDLVEVSSGEENEQVVFSHRAEIYRYDKDVGQWKERGIGDIKILQNYDNKQVRIVMRRDQVLKLCANHRITPDMSLQNMKGTERVWVWTACDFADGERKVEHLAVRFKLQDVADSFKKIFDEAKTAQEKDSLITPHVSRSSTPRESPCGKIAVAILEETTRERTDVIQGDDVADAASEVEVSSTSETTTKAVVSPPKFVFVSESVKRIFSSEKSKPFVFGNSSATGSLFGFSFNAPLKSNNSETSSVAQSGSESKVEPKKCELSKNSDIEQSSDSKVKNLSASFPTEESSINYTFKTPEKEPPLWHAEFTKEELVQKLRSTTKSADHLNGLLREIEATNAVLMEQIKLLKSEIRRLERNQEREKSAANLEYLKNVLLQFIFLKPGSERERLLPVINTMLQLSPEEKGKLAAVAQDEEENASRSSG.

At Thr19 the chain carries Phosphothreonine. Ser21 is modified (phosphoserine). TPR repeat units follow at residues 26-59, 60-93, and 648-681; these read SMKG…QERD, PKAH…NPTQ, and EDAH…VSYW. Disordered stretches follow at residues 760–804 and 924–945; these read GPLY…PRWT and FGIS…NDTG. Residues 778–797 are compositionally biased toward low complexity; sequence STPSPTKYSLSPSKSYKYSP. The segment covering 931–941 has biased composition (basic and acidic residues); the sequence is NQEKKREKPLE. The RanBD1 1 domain maps to 1036–1172; that stretch reads HFEPVVQMPE…FEECQRLLLD (137 aa). Disordered regions lie at residues 1214 to 1247 and 1306 to 1330; these read KVTE…PTLE and AKLN…EERD. Positions 1235 to 1244 are enriched in polar residues; sequence IKPNAENTGP. The segment covering 1317 to 1329 has biased composition (acidic residues); sequence TDEESVVTQEEER. A RanBD1 2 domain is found at 1333 to 1469; that stretch reads YFEPVVPLPD…FDEAKTAQEK (137 aa). Residues 1580–1593 are compositionally biased toward polar residues; the sequence is NNSETSSVAQSGSE. The interval 1580–1621 is disordered; that stretch reads NNSETSSVAQSGSESKVEPKKCELSKNSDIEQSSDSKVKNLS. Positions 1594–1617 are enriched in basic and acidic residues; that stretch reads SKVEPKKCELSKNSDIEQSSDSKV. The 51-residue stretch at 1702-1752 folds into the GRIP domain; the sequence is REKSAANLEYLKNVLLQFIFLKPGSERERLLPVINTMLQLSPEEKGKLAAV.

In terms of tissue distribution, expressed in testis.

It is found in the cytoplasm. This Homo sapiens (Human) protein is RANBP2-like and GRIP domain-containing protein 5/6 (RGPD5).